The primary structure comprises 399 residues: Vitamin K-dependent protein Z (399 aa).

The first 22 residues, 1 to 22, serve as a signal peptide directing secretion; the sequence is MAGCILLLRGFILTLILHQVEL. A propeptide spanning residues 23-40 is cleaved from the precursor; the sequence is SVFLPAPKANNVLRRWRR. The Gla domain occupies 41–86; the sequence is GSSYFLEEIFQGNLEKECYEEVCNYEEAREVFENDVITDEFWRQYG. A 4-carboxyglutamate mark is found at Glu47, Glu48, Glu55, Glu57, Glu60, Glu61, Glu66, Glu67, Glu70, Glu73, and Glu80. The cysteines at positions 58 and 63 are disulfide-linked. 2 consecutive EGF-like domains span residues 87-123 and 125-166; these read GGSP…KTCA and AKNE…KSCG. 7 disulfide bridges follow: Cys91/Cys102, Cys96/Cys111, Cys113/Cys122, Cys129/Cys141, Cys137/Cys150, Cys152/Cys165, and Cys208/Cys224. Residue Asn99 is glycosylated (N-linked (GlcNAc...) asparagine). Asp104 bears the (3R)-3-hydroxyaspartate mark. One can recognise a Peptidase S1 domain in the interval 172–399; that stretch reads ACGALTSEHI…YSMWFKQIMK (228 aa). N-linked (GlcNAc...) asparagine glycosylation is found at Asn230, Asn305, and Asn331. A disulfide bridge links Cys326 with Cys340.

This sequence belongs to the peptidase S1 family. Post-translationally, the iron and 2-oxoglutarate dependent 3-hydroxylation of aspartate and asparagine is (R) stereospecific within EGF domains. As to expression, plasma.

The protein localises to the secreted. In terms of biological role, appears to assist hemostasis by binding thrombin and promoting its association with phospholipid vesicles. Inhibits activity of the coagulation protease factor Xa in the presence of SERPINA10, calcium and phospholipids. In Mus musculus (Mouse), this protein is Vitamin K-dependent protein Z (Proz).